Reading from the N-terminus, the 231-residue chain is Large ribosomal subunit protein uL1 (231 aa).

The protein belongs to the universal ribosomal protein uL1 family. Part of the 50S ribosomal subunit.

In terms of biological role, binds directly to 23S rRNA. The L1 stalk is quite mobile in the ribosome, and is involved in E site tRNA release. Its function is as follows. Protein L1 is also a translational repressor protein, it controls the translation of the L11 operon by binding to its mRNA. The protein is Large ribosomal subunit protein uL1 of Acidovorax ebreus (strain TPSY) (Diaphorobacter sp. (strain TPSY)).